Consider the following 330-residue polypeptide: Inositol 2-dehydrogenase (330 aa).

It belongs to the Gfo/Idh/MocA family.

It carries out the reaction myo-inositol + NAD(+) = scyllo-inosose + NADH + H(+). It participates in polyol metabolism; myo-inositol degradation into acetyl-CoA; acetyl-CoA from myo-inositol: step 1/7. In terms of biological role, involved in the oxidation of myo-inositol (MI) to 2-keto-myo-inositol (2KMI or 2-inosose). This Rhizobium meliloti (strain 1021) (Ensifer meliloti) protein is Inositol 2-dehydrogenase (idhA).